A 49-amino-acid chain; its full sequence is uncharacterized protein (49 aa).

Residues 17–39 (LLVFDTSLYIPPFMLSFIGYSLS) form a helical membrane-spanning segment.

The protein resides in the membrane. This is an uncharacterized protein from Saccharomyces cerevisiae (strain ATCC 204508 / S288c) (Baker's yeast).